Consider the following 643-residue polypeptide: 3D-(3,5/4)-trihydroxycyclohexane-1,2-dione hydrolase (643 aa).

E65 is a binding site for thiamine diphosphate. Positions S441–G521 are thiamine pyrophosphate binding. The Mg(2+) site is built by D492 and N519.

Belongs to the TPP enzyme family. The cofactor is Mg(2+). Thiamine diphosphate is required as a cofactor.

The catalysed reaction is 3D-3,5/4-trihydroxycyclohexane-1,2-dione + H2O = 5-deoxy-D-glucuronate + H(+). It functions in the pathway polyol metabolism; myo-inositol degradation into acetyl-CoA; acetyl-CoA from myo-inositol: step 3/7. Functionally, involved in the cleavage of the C1-C2 bond of 3D-(3,5/4)-trihydroxycyclohexane-1,2-dione (THcHDO) to yield 5-deoxy-glucuronate (5DG). In Clostridium botulinum (strain Eklund 17B / Type B), this protein is 3D-(3,5/4)-trihydroxycyclohexane-1,2-dione hydrolase.